The sequence spans 65 residues: uncharacterized protein (65 aa).

Transmembrane regions (helical) follow at residues 12 to 31 (IVKW…LIVV) and 41 to 63 (LVAR…AIIV).

The protein resides in the cell membrane. This is an uncharacterized protein from Halalkalibacterium halodurans (strain ATCC BAA-125 / DSM 18197 / FERM 7344 / JCM 9153 / C-125) (Bacillus halodurans).